The primary structure comprises 278 residues: Bis(5'-nucleosyl)-tetraphosphatase, symmetrical (278 aa).

Belongs to the Ap4A hydrolase family.

It carries out the reaction P(1),P(4)-bis(5'-adenosyl) tetraphosphate + H2O = 2 ADP + 2 H(+). In terms of biological role, hydrolyzes diadenosine 5',5'''-P1,P4-tetraphosphate to yield ADP. In Nitrosococcus oceani (strain ATCC 19707 / BCRC 17464 / JCM 30415 / NCIMB 11848 / C-107), this protein is Bis(5'-nucleosyl)-tetraphosphatase, symmetrical.